The sequence spans 566 residues: Chaperone ric-8 (566 aa).

This sequence belongs to the synembryn family. Interacts with GDP-bound G-alpha proteins goa-1 and gpa-16. Does not interact with G-alpha proteins when they are in complex with subunits beta and gamma. Present throughout the nervous system in juveniles and adults (at protein level).

It is found in the cytoplasm. The protein resides in the cell cortex. In terms of biological role, chaperone that specifically binds and folds some, but not all, nascent G alpha proteins prior to G protein heterotrimer formation, promoting their stability and activity. Also acts as a guanine nucleotide exchange factor (GEF) for G alpha proteins by stimulating exchange of bound GDP for free GTP. Able to facilitate synaptic transmission in the nervous system probably by activating G(q)-alpha (egl-30). Also able to activate the G(s)-alpha in synaptic signaling network. Plays a key role in asymmetric spindle positioning, a step for asymmetric cell division that generates cell diversity during development by activating G(i)-alpha protein goa-1 and gpa-16 independently of G-protein coupled receptors. While it acts as a GEF for goa-1, it has no GEF activity toward gpa-16. In addition to its GEF activity, it is required for cortical subcellular localization of G-alpha proteins such as gpa-16. Also required for the interaction of goa-1 and gpr-1/2, suggesting that it may act by generating G-alpha proteins free from G-beta-gamma subunits, enabling gpr-1/2 to mediate asymmetric cell division. The sequence is that of Chaperone ric-8 (ric-8) from Caenorhabditis elegans.